We begin with the raw amino-acid sequence, 113 residues long: Small ribosomal subunit protein bS6 (113 aa).

The protein belongs to the bacterial ribosomal protein bS6 family.

Its function is as follows. Binds together with bS18 to 16S ribosomal RNA. This chain is Small ribosomal subunit protein bS6 (rpsF), found in Buchnera aphidicola subsp. Acyrthosiphon pisum (strain APS) (Acyrthosiphon pisum symbiotic bacterium).